The chain runs to 573 residues: 60 kDa heat shock protein, mitochondrial (573 aa).

The N-terminal 26 residues, 1–26 (MLRLPTVLRQMRPVSRALAPHLTRAY), are a transit peptide targeting the mitochondrion. Lys-31 bears the N6-succinyllysine mark. Residues Ser-67 and Ser-70 each carry the phosphoserine modification. Lys-75 lines the ATP pocket. N6-acetyllysine is present on Lys-75. Residue Lys-82 is modified to N6-acetyllysine; alternate. Lys-82 bears the N6-succinyllysine; alternate mark. At Lys-87 the chain carries N6-acetyllysine. Residue Tyr-90 is modified to Phosphotyrosine. An N6-acetyllysine modification is found at Lys-91. Residue 111 to 115 (DGTTT) coordinates ATP. At Lys-125 the chain carries N6-acetyllysine; alternate. Lys-125 bears the N6-succinyllysine; alternate mark. At Lys-130 the chain carries N6-acetyllysine. Lys-133 is modified (N6-acetyllysine; alternate). Residue Lys-133 is modified to N6-succinyllysine; alternate. Lys-133 bears the N6-malonyllysine; alternate mark. Lys-156 is modified (N6-acetyllysine). N6-acetyllysine; alternate occurs at positions 191, 202, 205, 218, and 236. Lys-191, Lys-202, Lys-205, Lys-218, and Lys-236 each carry N6-succinyllysine; alternate. At Lys-249 the chain carries N6-acetyllysine. Lys-250 bears the N6-acetyllysine; alternate mark. At Lys-250 the chain carries N6-succinyllysine; alternate. 2 positions are modified to N6-acetyllysine: Lys-269 and Lys-292. At Lys-301 the chain carries N6-succinyllysine. N6-acetyllysine is present on Lys-314. The residue at position 352 (Lys-352) is an N6-acetyllysine; alternate. An N6-succinyllysine; alternate modification is found at Lys-352. N6-acetyllysine occurs at positions 359 and 389. Lys-396 carries the N6-acetyllysine; alternate modification. Position 396 is an N6-succinyllysine; alternate (Lys-396). Ser-410 carries the post-translational modification Phosphoserine. Residue Gly-440 participates in ATP binding. Residue Lys-455 is modified to N6-acetyllysine; alternate. Lys-455 bears the N6-succinyllysine; alternate mark. The residue at position 469 (Lys-469) is an N6-acetyllysine. Lys-481 is subject to N6-acetyllysine; alternate. Lys-481 carries the N6-succinyllysine; alternate modification. Position 488 is a phosphoserine (Ser-488). Asp-520 provides a ligand contact to ATP. Residue Lys-551 forms a Glycyl lysine isopeptide (Lys-Gly) (interchain with G-Cter in SUMO2) linkage.

It belongs to the chaperonin (HSP60) family. Homoheptamer arranged in a ring structure. The functional units of these chaperonins consist of heptameric rings of the large subunit Hsp60, which function as a back-to-back double ring. Interacts with 2 heptameric Hsp10 rings to form the symmetrical football complex. Interacts with HRAS. Interacts with ATAD3A. Interacts with ETFBKMT and EEF1AKMT3. Interacts with MFHAS1.

Its subcellular location is the mitochondrion matrix. The catalysed reaction is ATP + H2O + a folded polypeptide = ADP + phosphate + an unfolded polypeptide.. In terms of biological role, chaperonin implicated in mitochondrial protein import and macromolecular assembly. Together with Hsp10, facilitates the correct folding of imported proteins. May also prevent misfolding and promote the refolding and proper assembly of unfolded polypeptides generated under stress conditions in the mitochondrial matrix. The functional units of these chaperonins consist of heptameric rings of the large subunit Hsp60, which function as a back-to-back double ring. In a cyclic reaction, Hsp60 ring complexes bind one unfolded substrate protein per ring, followed by the binding of ATP and association with 2 heptameric rings of the co-chaperonin Hsp10. This leads to sequestration of the substrate protein in the inner cavity of Hsp60 where, for a certain period of time, it can fold undisturbed by other cell components. Synchronous hydrolysis of ATP in all Hsp60 subunits results in the dissociation of the chaperonin rings and the release of ADP and the folded substrate protein. This Rattus norvegicus (Rat) protein is 60 kDa heat shock protein, mitochondrial (Hspd1).